Here is a 416-residue protein sequence, read N- to C-terminus: Cell division control protein 3 (416 aa).

Residues 32–307 (RGFSLNIMAI…ENYRTEKLKR (276 aa)) enclose the Septin-type G domain. Residues 42-49 (GESGLGKA) form a G1 motif region. GTP is bound by residues 42 to 49 (GESGLGKA), S79, G105, 184 to 192 (KSDTLTDEE), G240, and R256. The interval 102–105 (TAPG) is G3 motif. The tract at residues 183-186 (AKSD) is G4 motif. The stretch at 323-399 (AAKQEEERAL…QLEKQKLLPQ (77 aa)) forms a coiled coil. The segment at 392 to 416 (EKQKLLPQDPPAQPAPQKSRKGFLR) is disordered.

The protein belongs to the TRAFAC class TrmE-Era-EngA-EngB-Septin-like GTPase superfamily. Septin GTPase family.

The protein localises to the bud neck. Functionally, plays a role in the cell cycle. Involved in the formation of the ring of filaments in the neck region at the mother-bud junction during mitosis. The sequence is that of Cell division control protein 3 (CDC3) from Candida albicans (Yeast).